Consider the following 435-residue polypeptide: tRNA-2-methylthio-N(6)-dimethylallyladenosine synthase (435 aa).

One can recognise an MTTase N-terminal domain in the interval 5 to 120 (KKLFIETLGC…ISEVLHKERA (116 aa)). [4Fe-4S] cluster is bound by residues Cys14, Cys51, Cys83, Cys152, Cys156, and Cys159. Residues 138 to 372 (RTSPYKAYIN…NLAVNILDEK (235 aa)) form the Radical SAM core domain. The TRAM domain maps to 374–435 (KTHLGKIYRV…RTILSGEIVG (62 aa)).

This sequence belongs to the methylthiotransferase family. MiaB subfamily. In terms of assembly, monomer. Requires [4Fe-4S] cluster as cofactor.

Its subcellular location is the cytoplasm. It carries out the reaction N(6)-dimethylallyladenosine(37) in tRNA + (sulfur carrier)-SH + AH2 + 2 S-adenosyl-L-methionine = 2-methylsulfanyl-N(6)-dimethylallyladenosine(37) in tRNA + (sulfur carrier)-H + 5'-deoxyadenosine + L-methionine + A + S-adenosyl-L-homocysteine + 2 H(+). Functionally, catalyzes the methylthiolation of N6-(dimethylallyl)adenosine (i(6)A), leading to the formation of 2-methylthio-N6-(dimethylallyl)adenosine (ms(2)i(6)A) at position 37 in tRNAs that read codons beginning with uridine. The chain is tRNA-2-methylthio-N(6)-dimethylallyladenosine synthase from Sulfurimonas denitrificans (strain ATCC 33889 / DSM 1251) (Thiomicrospira denitrificans (strain ATCC 33889 / DSM 1251)).